The primary structure comprises 100 residues: Urease subunit gamma (100 aa).

This sequence belongs to the urease gamma subunit family. Heterotrimer of UreA (gamma), UreB (beta) and UreC (alpha) subunits. Three heterotrimers associate to form the active enzyme.

Its subcellular location is the cytoplasm. It catalyses the reaction urea + 2 H2O + H(+) = hydrogencarbonate + 2 NH4(+). The protein operates within nitrogen metabolism; urea degradation; CO(2) and NH(3) from urea (urease route): step 1/1. In Parasynechococcus marenigrum (strain WH8102), this protein is Urease subunit gamma.